Consider the following 667-residue polypeptide: Mediator of RNA polymerase II transcription subunit 17 (667 aa).

Residues 172-197 (KRRALQEAVQVLDMAQKQRQRASSNL) adopt a coiled-coil conformation.

The protein belongs to the Mediator complex subunit 17 family. As to quaternary structure, component of the Mediator complex.

It is found in the nucleus. In terms of biological role, component of the Mediator complex, a coactivator involved in regulated gene transcription of nearly all RNA polymerase II-dependent genes. Mediator functions as a bridge to convey information from gene-specific regulatory proteins to the basal RNA polymerase II transcription machinery. Mediator is recruited to promoters by direct interactions with regulatory proteins and serves as a scaffold for the assembly of a functional preinitiation complex with RNA polymerase II and the general transcription factors. The polypeptide is Mediator of RNA polymerase II transcription subunit 17 (mdt-17) (Caenorhabditis elegans).